The primary structure comprises 863 residues: DNA replication licensing factor mcm4-B (863 aa).

The segment at 1-130 (MSSPTSTPSR…ARKVKQVDLH (130 aa)) is disordered. Composition is skewed to polar residues over residues 54-64 (SPSGDVQSPSG) and 84-99 (LDLSSPLTYGTPSSRV). Residues 306–331 (CQVCAFTTRVEIDRGRIAEPSVCKHC) form a C4-type zinc finger. Residues 458 to 667 (IYERLAAALA…YDRRLAHHLV (210 aa)) form the MCM domain. Tyrosine 471, arginine 497, lysine 516, serine 517, asparagine 618, arginine 643, arginine 732, and glutamate 735 together coordinate ATP. The Arginine finger signature appears at 642 to 645 (SRFD).

This sequence belongs to the MCM family. As to quaternary structure, component of the mcm2-7 complex (RLF-M). The complex forms a toroidal hexameric ring with the proposed subunit order mcm2-mcm6-mcm4-mcm7-mcm3-mcm5. The heterodimer of mmcm3/mcm5 interacts with mcm4, mmcm6, mcm7 and weakly with mcm2. Begins to associate with zmcm6 at the neurula stage. Component of the CMG helicase complex, composed of the mcm2-7 complex, the GINS complex and cdc45. Post-translationally, hyperphosphorylated during mitosis in a mechanism requiring cdc2-cyclin B and other kinases. Undergoes dephosphorylation after exiting mitosis, existing in a partially phosphorylated state in the cytosolic interphase mcm complex which associates with the pre-replication complexes (pre-Rcs). Complete dephosphorylation inactivates the mcm complex, preventing its binding to chromatin. Becomes actively phosphorylated during S phase once the mcm complex is assembled on the chromatin. This chromatin-associated phosphorylation occurs during the activation of the pre-Rcs and is independent of cdks. Phosphorylated by the cdc7-dbf4b complex.

It localises to the nucleus. The protein resides in the chromosome. It catalyses the reaction ATP + H2O = ADP + phosphate + H(+). Acts as a component of the MCM2-7 complex (MCM complex) which is the replicative helicase essential for 'once per cell cycle' DNA replication initiation and elongation in eukaryotic cells. Core component of CDC45-MCM-GINS (CMG) helicase, the molecular machine that unwinds template DNA during replication, and around which the replisome is built. The active ATPase sites in the MCM2-7 ring are formed through the interaction surfaces of two neighboring subunits such that a critical structure of a conserved arginine finger motif is provided in trans relative to the ATP-binding site of the Walker A box of the adjacent subunit. The six ATPase active sites, however, are likely to contribute differentially to the complex helicase activity. The chain is DNA replication licensing factor mcm4-B (mcm4-b) from Xenopus laevis (African clawed frog).